The sequence spans 1207 residues: DNA-directed RNA polymerase subunit beta' (1207 aa).

Residues C60, C62, C75, and C78 each contribute to the Zn(2+) site. Mg(2+) is bound by residues D450, D452, and D454. Zn(2+) contacts are provided by C819, C893, C900, and C903.

Belongs to the RNA polymerase beta' chain family. In terms of assembly, the RNAP catalytic core consists of 2 alpha, 1 beta, 1 beta' and 1 omega subunit. When a sigma factor is associated with the core the holoenzyme is formed, which can initiate transcription. Mg(2+) is required as a cofactor. Requires Zn(2+) as cofactor.

It catalyses the reaction RNA(n) + a ribonucleoside 5'-triphosphate = RNA(n+1) + diphosphate. In terms of biological role, DNA-dependent RNA polymerase catalyzes the transcription of DNA into RNA using the four ribonucleoside triphosphates as substrates. This chain is DNA-directed RNA polymerase subunit beta', found in Streptococcus pyogenes serotype M3 (strain SSI-1).